Consider the following 84-residue polypeptide: Polyketide-8 synthase acyl carrier protein 1 (84 aa).

Residues 7–82 form the Carrier domain; sequence AARKQEIKEI…GVYVVVSEAA (76 aa). S42 bears the O-(pantetheine 4'-phosphoryl)serine mark.

In terms of processing, 4'-phosphopantetheine is transferred from CoA to a specific serine of the apo-ACP-like protein.

Its function is as follows. Acyl carrier protein. This chain is Polyketide-8 synthase acyl carrier protein 1, found in Streptomyces avermitilis (strain ATCC 31267 / DSM 46492 / JCM 5070 / NBRC 14893 / NCIMB 12804 / NRRL 8165 / MA-4680).